A 454-amino-acid chain; its full sequence is Aminodeoxychorismate synthase component 1 (454 aa).

L-tryptophan-binding positions include Ser37, 44-47, and 241-243; these read YNRF and PFS. Glu259 acts as the Proton donor in catalysis. The active-site N6-(4-deoxychorismate)-lysine intermediate is Lys275.

This sequence belongs to the anthranilate synthase component I family. Monomer. Heterodimer consisting of two non-identical subunits: a glutamine amidotransferase subunit (PabA) and a aminodeoxychorismate synthase subunit (PabB). It depends on Mg(2+) as a cofactor.

It catalyses the reaction chorismate + L-glutamine = 4-amino-4-deoxychorismate + L-glutamate. It functions in the pathway cofactor biosynthesis; tetrahydrofolate biosynthesis; 4-aminobenzoate from chorismate: step 1/2. Functionally, part of a heterodimeric complex that catalyzes the two-step biosynthesis of 4-amino-4-deoxychorismate (ADC), a precursor of p-aminobenzoate (PABA) and tetrahydrofolate. In the first step, a glutamine amidotransferase (PabA) generates ammonia as a substrate that, along with chorismate, is used in the second step, catalyzed by aminodeoxychorismate synthase (PabB) to produce ADC. The polypeptide is Aminodeoxychorismate synthase component 1 (pabB) (Salmonella typhimurium (strain LT2 / SGSC1412 / ATCC 700720)).